We begin with the raw amino-acid sequence, 304 residues long: Acetylglutamate kinase (304 aa).

Substrate-binding positions include 82 to 83, Arg104, and Asn197; that span reads GG.

The protein belongs to the acetylglutamate kinase family. ArgB subfamily.

The protein localises to the cytoplasm. The enzyme catalyses N-acetyl-L-glutamate + ATP = N-acetyl-L-glutamyl 5-phosphate + ADP. The protein operates within amino-acid biosynthesis; L-arginine biosynthesis; N(2)-acetyl-L-ornithine from L-glutamate: step 2/4. Functionally, catalyzes the ATP-dependent phosphorylation of N-acetyl-L-glutamate. The chain is Acetylglutamate kinase from Prochlorococcus marinus (strain NATL2A).